Consider the following 507-residue polypeptide: MYSPESMNSNISSPSPPSSSSLNAPSLADAPEVRSDDGEAETSEPSTSVTAVPMEIVSQASTSAPVNQLLASGIDMSSVIKNNAVLQALLASASAGGFGDNAGLTMSKLLTAALANGSTAVAKRDAGSPRTDIPKKTRLKVFSNGFFMTFDKLSSCQKKYFWRCEYKNTCKARMHTDIVTEKILTFIHEHNHSAPIDEEVRLYGLDPTNIERNRVYIVGNVADPNQRRKIRKQVADREAAAKRLVQQQEEEQQKQQSASSIVAARAAYAQAMQNGSIPTSSGVASFLQSTSATAPMTSHSMLLAQMPFLNNIKTEMSNMVKNEQFTPERYTQHMSPNLPLQTATIAPLIIPTENYDSPSYRQPAIKRKATDLTNEEHDLRRDPMFQPTFELARKLRKLWKGEPNRYPRTTTTPTHHFEFFLSKNDGTDEHLYVPMRINLRDEAHLKEALQDFCGQQCIGMLLFGISPKISVMFNQPMLNNWDNNQFFLLDISNPSRWRLMYVDDQAV.

Residues 1 to 26 show a composition bias toward low complexity; it reads MYSPESMNSNISSPSPPSSSSLNAPS. Residues 1-51 form a disordered region; it reads MYSPESMNSNISSPSPPSSSSLNAPSLADAPEVRSDDGEAETSEPSTSVTA. The segment at 135–192 adopts an FLYWCH-type zinc-finger fold; it reads KKTRLKVFSNGFFMTFDKLSSCQKKYFWRCEYKNTCKARMHTDIVTEKILTFIHEHNH.

Its function is as follows. Probable transcription factor. Binds to the DNA sequence motif 5'-[AG]GGCGCCG-3' in the promoters of target genes, including micro-RNA genes, in order to repress expression, and acting redundantly with flh-2. The polypeptide is FLYWCH transcription factor 1 (Caenorhabditis elegans).